Reading from the N-terminus, the 145-residue chain is MGVASQSSVANEAGAAPEASIQQTLRGFSSPTSLLLRIATAVLCTLTLAFLVTSKERKEIASIDIVAIWSNSKALIFLAVVSGICLGYSLLHAAVFLVMLSGNRKPLARKKALDWMVFLADQVFFKIFCWFSIRVSSRRSKAGFV.

Residues 1-31 (MGVASQSSVANEAGAAPEASIQQTLRGFSSP) are Cytoplasmic-facing. The helical transmembrane segment at 32-52 (TSLLLRIATAVLCTLTLAFLV) threads the bilayer. Topologically, residues 53–75 (TSKERKEIASIDIVAIWSNSKAL) are extracellular. Residues 76–96 (IFLAVVSGICLGYSLLHAAVF) traverse the membrane as a helical segment. Residues 97-112 (LVMLSGNRKPLARKKA) lie on the Cytoplasmic side of the membrane. The helical transmembrane segment at 113–133 (LDWMVFLADQVFFKIFCWFSI) threads the bilayer. At 134–145 (RVSSRRSKAGFV) the chain is on the extracellular side.

Belongs to the Casparian strip membrane proteins (CASP) family. Homodimer and heterodimers.

It localises to the cell membrane. This chain is CASP-like protein SELMODRAFT_406854, found in Selaginella moellendorffii (Spikemoss).